We begin with the raw amino-acid sequence, 680 residues long: Transketolase 1 (680 aa).

Histidine 30 is a substrate binding site. Thiamine diphosphate is bound by residues histidine 69 and 116 to 118 (GPL). Aspartate 157 lines the Mg(2+) pocket. The thiamine diphosphate site is built by glycine 158 and asparagine 187. Mg(2+) contacts are provided by asparagine 187 and isoleucine 189. Position 263 (histidine 263) interacts with substrate. Thiamine diphosphate is bound at residue histidine 263. A phosphoserine mark is found at serine 286 and serine 335. 2 residues coordinate substrate: arginine 359 and serine 386. Serine 402 is subject to Phosphoserine. Glutamate 418 and phenylalanine 445 together coordinate thiamine diphosphate. Glutamate 418 (proton donor) is an active-site residue. Histidine 469 and aspartate 477 together coordinate substrate. Phosphoserine is present on serine 492. Arginine 528 serves as a coordination point for substrate. A Glycyl lysine isopeptide (Lys-Gly) (interchain with G-Cter in ubiquitin) cross-link involves residue lysine 647.

This sequence belongs to the transketolase family. In terms of assembly, homodimer. Requires Mg(2+) as cofactor. Ca(2+) is required as a cofactor. The cofactor is Mn(2+). Co(2+) serves as cofactor. It depends on thiamine diphosphate as a cofactor.

The enzyme catalyses D-sedoheptulose 7-phosphate + D-glyceraldehyde 3-phosphate = aldehydo-D-ribose 5-phosphate + D-xylulose 5-phosphate. Catalyzes the transfer of a two-carbon ketol group from a ketose donor to an aldose acceptor, via a covalent intermediate with the cofactor thiamine pyrophosphate. This Saccharomyces cerevisiae (strain ATCC 204508 / S288c) (Baker's yeast) protein is Transketolase 1 (TKL1).